A 127-amino-acid polypeptide reads, in one-letter code: Glycine cleavage system H protein (127 aa).

The Lipoyl-binding domain occupies 24-106 (TATLGISAFA…YGEGWLVKVQ (83 aa)). An N6-lipoyllysine modification is found at Lys-65.

Belongs to the GcvH family. As to quaternary structure, the glycine cleavage system is composed of four proteins: P, T, L and H. Requires (R)-lipoate as cofactor.

Its function is as follows. The glycine cleavage system catalyzes the degradation of glycine. The H protein shuttles the methylamine group of glycine from the P protein to the T protein. This Thermosynechococcus vestitus (strain NIES-2133 / IAM M-273 / BP-1) protein is Glycine cleavage system H protein.